Consider the following 513-residue polypeptide: Acyltransferase uat1 (513 aa).

His158 serves as the catalytic Proton acceptor.

The protein belongs to the plant acyltransferase family.

Its pathway is secondary metabolite biosynthesis. In terms of biological role, acyltransferase; part of the gene cluster that mediates the biosynthesis of the glycolipid biosurfactant ustilagic acid (UA). UA is a secreted cellobiose glycolipid that is toxic for many microorganisms and confers biocontrol activity to U.maydis. UA consists of 15,16-dihydroxypalmitic or 2,15,16-trihydroxypalmitic acid, which is O-glycosidically linked to cellobiose at its terminal hydroxyl group. In addition, the cellobiose moiety is acetylated and acylated with a short-chain hydroxy fatty acid. UA biosynthesis starts with omega-hydroxylation of palmitic acid catalyzed by the cytochrome P450 monooxygenase cyp1. Terminal hydroxylation of palmitic acid precedes subterminal hydroxylation catalyzed by the cytochrome P450 monooxygenase cyp2. Sequential glucosylation of the hydroxy fatty acid is probably catalyzed by the glycosyltransferase ugt1. The cellobiose lipid is further decorated by acetylation of the proximal glucose residue and by acylation with a short-chain beta-hydroxy fatty acid at the distal glucose residue. The acyltransferase uat1 may be a good candidate for catalyzing either acetylation or acylation of the cellobiose lipid. The fatty acid synthase fas2 may be involved in synthesis of the carbon backbone of the short-chain beta-hydroxy fatty acid esterified to the cellobiose disaccharide. The secreted UA consists of a mixture of both alpha-hydroxylated and non-hydroxylated glycolipids; therefore, alpha-hydroxylation of the long-chain fatty, catalyzed by the fatty acid hydroxylase ahd1, occurs late in UA biosynthesis and may be the last step before secretion. This is Acyltransferase uat1 from Mycosarcoma maydis (Corn smut fungus).